A 143-amino-acid polypeptide reads, in one-letter code: Hypoxic response protein 1 (143 aa).

CBS domains follow at residues Met8–Pro65 and Leu73–Phe131. Cysteines 14 and 39 form a disulfide. Positions 97 and 122 each coordinate Zn(2+).

As to quaternary structure, homodimer.

It is found in the secreted. In terms of biological role, unlike some other CBS-domain containing proteins does not seem to bind AMP. This Mycobacterium tuberculosis (strain CDC 1551 / Oshkosh) protein is Hypoxic response protein 1 (hrp1).